Reading from the N-terminus, the 453-residue chain is MVLLLPWLFIILWLENAQAQLEDEGNFYSENVSRILDNLLEGYDNRLRPGFGGAVTEVKTDIYVTSFGPVSDVEMEYTMDVFFRQTWTDERLKFKGPAEILSLNNLMVSKIWTPDTFFRNGKKSIAHNMTTPNKLFRLMQNGTILYTMRLTINADCPMRLVNFPMDGHACPLKFGSYAYPKTEIIYTWKKGPLYSVEVPEESSSLLQYDLIGQTVSSETIKSNTGEYVIMTVYFHLQRKMGYFMIQIYTPCIMTVILSQVSFWINKESVPARTVFGITTVLTMTTLSISARHSLPKVSYATAMDWFIAVCFAFVFSALIEFAAVNYFTNLQSQKAERQAQTAATPPVAKSKASESLQAEIVVHSDSKYHLKKRISSLTLPIVPSSEASKALSRTPILKSTPVSPPLLLPATGGTSKIDQYSRILFPVAFAGFNLVYWIVYLSKDTMEVSSTVE.

Positions 1 to 19 (MVLLLPWLFIILWLENAQA) are cleaved as a signal peptide. Over 20 to 243 (QLEDEGNFYS…FHLQRKMGYF (224 aa)) the chain is Extracellular. N-linked (GlcNAc...) asparagine glycosylation is present at Asn-31. 4-aminobutanoate is bound at residue Arg-84. N-linked (GlcNAc...) asparagine glycans are attached at residues Asn-128 and Asn-141. Thr-147 provides a ligand contact to 4-aminobutanoate. A disulfide bond links Cys-156 and Cys-170. A helical transmembrane segment spans residues 244 to 264 (MIQIYTPCIMTVILSQVSFWI). Over 265–270 (NKESVP) the chain is Cytoplasmic. Residues 271 to 290 (ARTVFGITTVLTMTTLSISA) traverse the membrane as a helical segment. Residues 291–304 (RHSLPKVSYATAMD) are Extracellular-facing. The helical transmembrane segment at 305–325 (WFIAVCFAFVFSALIEFAAVN) threads the bilayer. The Cytoplasmic portion of the chain corresponds to 326–422 (YFTNLQSQKA…GTSKIDQYSR (97 aa)). Residue Ser-375 is modified to Phosphoserine. A helical transmembrane segment spans residues 423-443 (ILFPVAFAGFNLVYWIVYLSK). Over 444-453 (DTMEVSSTVE) the chain is Extracellular.

It belongs to the ligand-gated ion channel (TC 1.A.9) family. Gamma-aminobutyric acid receptor (TC 1.A.9.5) subfamily. GABRA6 sub-subfamily. In terms of assembly, heteropentamer, formed by a combination of alpha (GABRA1-6), beta (GABRB1-3), gamma (GABRG1-3), delta (GABRD), epsilon (GABRE), rho (GABRR1-3), pi (GABRP) and theta (GABRQ) chains, each subunit exhibiting distinct physiological and pharmacological properties. Binds UBQLN1. Expressed in brain, in cerebellar granule cells.

It is found in the postsynaptic cell membrane. The protein localises to the cell membrane. It carries out the reaction chloride(in) = chloride(out). Functionally, alpha subunit of the heteropentameric ligand-gated chloride channel gated by gamma-aminobutyric acid (GABA), a major inhibitory neurotransmitter in the brain. GABA-gated chloride channels, also named GABA(A) receptors (GABAAR), consist of five subunits arranged around a central pore and contain GABA active binding site(s) located at the alpha and beta subunit interface(s). When activated by GABA, GABAARs selectively allow the flow of chloride anions across the cell membrane down their electrochemical gradient. Alpha-6/GABRA6 subunits are found at both synaptic and extrasynaptic sites. Chloride influx into the postsynaptic neuron following GABAAR opening decreases the neuron ability to generate a new action potential, thereby reducing nerve transmission. Extrasynaptic alpha-6-containing receptors contribute to the tonic GABAergic inhibition. Alpha-6 subunits are also present on glutamatergic synapses. This chain is Gamma-aminobutyric acid receptor subunit alpha-6, found in Mus musculus (Mouse).